A 154-amino-acid polypeptide reads, in one-letter code: Myoglobin (154 aa).

The 147-residue stretch at 2–148 folds into the Globin domain; it reads GLSDGEWTLV…FRNDMAAQYK (147 aa). A Phosphoserine modification is found at S4. H65 provides a ligand contact to nitrite. O2 is bound at residue H65. Position 68 is a phosphothreonine (T68). H94 provides a ligand contact to heme b.

The protein belongs to the globin family. As to quaternary structure, monomeric.

The protein resides in the cytoplasm. It localises to the sarcoplasm. The enzyme catalyses Fe(III)-heme b-[protein] + nitric oxide + H2O = Fe(II)-heme b-[protein] + nitrite + 2 H(+). The catalysed reaction is H2O2 + AH2 = A + 2 H2O. Functionally, monomeric heme protein which primary function is to store oxygen and facilitate its diffusion within muscle tissues. Reversibly binds oxygen through a pentacoordinated heme iron and enables its timely and efficient release as needed during periods of heightened demand. Depending on the oxidative conditions of tissues and cells, and in addition to its ability to bind oxygen, it also has a nitrite reductase activity whereby it regulates the production of bioactive nitric oxide. Under stress conditions, like hypoxia and anoxia, it also protects cells against reactive oxygen species thanks to its pseudoperoxidase activity. The sequence is that of Myoglobin from Capra hircus (Goat).